We begin with the raw amino-acid sequence, 370 residues long: uncharacterized protein (370 aa).

The next 2 membrane-spanning stretches (helical) occupy residues 11-31 and 104-124; these read LFIF…LVFP and IITS…PILI. Residues 145–197 form a disordered region; the sequence is HHNNNNNNNNNNNNNNNNNNNNNNNNNNNNNNNNNNNNQNNNNNDNNDNNDVL. Low complexity predominate over residues 147–194; sequence NNNNNNNNNNNNNNNNNNNNNNNNNNNNNNNNNNNNQNNNNNDNNDNN. The next 2 helical transmembrane spans lie at 227–247 and 310–330; these read ITQL…TFVV and LSLC…FLII.

The protein resides in the membrane. This is an uncharacterized protein from Dictyostelium discoideum (Social amoeba).